We begin with the raw amino-acid sequence, 194 residues long: Protein GrpE (194 aa).

Residues 1–13 (MENTQENPTSQNP) are compositionally biased toward polar residues. The tract at residues 1-50 (MENTQENPTSQNPKPAEETARQAAEAAAPQQEAAANAATDSPASAEQAAL) is disordered. Positions 21–50 (RQAAEAAAPQQEAAANAATDSPASAEQAAL) are enriched in low complexity.

The protein belongs to the GrpE family. As to quaternary structure, homodimer.

The protein localises to the cytoplasm. In terms of biological role, participates actively in the response to hyperosmotic and heat shock by preventing the aggregation of stress-denatured proteins, in association with DnaK and GrpE. It is the nucleotide exchange factor for DnaK and may function as a thermosensor. Unfolded proteins bind initially to DnaJ; upon interaction with the DnaJ-bound protein, DnaK hydrolyzes its bound ATP, resulting in the formation of a stable complex. GrpE releases ADP from DnaK; ATP binding to DnaK triggers the release of the substrate protein, thus completing the reaction cycle. Several rounds of ATP-dependent interactions between DnaJ, DnaK and GrpE are required for fully efficient folding. The polypeptide is Protein GrpE (Paraburkholderia xenovorans (strain LB400)).